Reading from the N-terminus, the 164-residue chain is Peptidyl-prolyl cis-trans isomerase B (164 aa).

A PPIase cyclophilin-type domain is found at 1 to 162; sequence MVTFHTNHGD…EDVIIESVTV (162 aa).

This sequence belongs to the cyclophilin-type PPIase family.

Its subcellular location is the cytoplasm. It carries out the reaction [protein]-peptidylproline (omega=180) = [protein]-peptidylproline (omega=0). Inhibition by cyclosporin A with a Ki of 25 to 50 mu-mol, a concentration 1000-fold higher than that required for eukaryotic PPIases. In terms of biological role, PPIases accelerate the folding of proteins. It catalyzes the cis-trans isomerization of proline imidic peptide bonds in oligopeptides. This Escherichia coli (strain K12) protein is Peptidyl-prolyl cis-trans isomerase B (ppiB).